The following is a 78-amino-acid chain: Neurogranin (78 aa).

An N-acetylmethionine modification is found at Met-1. An IQ domain is found at 26-49; that stretch reads ANAAAAKIQASFRGHMARKKIKSG. Ser-36 is subject to Phosphoserine; by PHK and PKC. The disordered stretch occupies residues 38–78; sequence RGHMARKKIKSGERGRKGPGPGGPGGAGGARGGAGGGPSGD. One can recognise a Collagen-like domain in the interval 50–78; the sequence is ERGRKGPGPGGPGGAGGARGGAGGGPSGD. Over residues 55–78 the composition is skewed to gly residues; that stretch reads GPGPGGPGGAGGARGGAGGGPSGD. Arg-68 bears the Citrulline; partial mark. Arg-68 carries the omega-N-methylarginine modification.

The protein belongs to the neurogranin family. Post-translationally, the N-terminus is blocked. Phosphorylated at Ser-36 by PHK and PKC. Phosphorylation prevents interaction with Calmodulin and interrupts several learning- and memory-associated functions. As to expression, is highly enriched in brain. Accumulates postsynaptically in dendritic spines of neostriatal neurons.

Its function is as follows. Acts as a 'third messenger' substrate of protein kinase C-mediated molecular cascades during synaptic development and remodeling. Binds to calmodulin in the absence of calcium. This is Neurogranin (NRGN) from Bos taurus (Bovine).